We begin with the raw amino-acid sequence, 200 residues long: Small ribosomal subunit protein uS4 (200 aa).

The interval 22-42 is disordered; sequence TGKELEKRPYAPGPHGPNQRK. The S4 RNA-binding domain maps to 92–152; it reads ARLDNLVYRM…EKSNSLVVVK (61 aa).

The protein belongs to the universal ribosomal protein uS4 family. In terms of assembly, part of the 30S ribosomal subunit. Contacts protein S5. The interaction surface between S4 and S5 is involved in control of translational fidelity.

In terms of biological role, one of the primary rRNA binding proteins, it binds directly to 16S rRNA where it nucleates assembly of the body of the 30S subunit. With S5 and S12 plays an important role in translational accuracy. This is Small ribosomal subunit protein uS4 from Bacillus cereus (strain B4264).